We begin with the raw amino-acid sequence, 215 residues long: Cytochrome b6 (215 aa).

The chain crosses the membrane as a helical span at residues 32–52; sequence IFYCLGGITFTCFIIQVATGF. Cysteine 35 provides a ligand contact to heme c. Residues histidine 86 and histidine 100 each contribute to the heme b site. 3 helical membrane passes run 90-110, 116-136, and 186-206; these read ASMMVLMMILHVCRVYLTGGF, LTWVTGIILAILTVSFGVTGY, and LHTFVLPLLTATFMLGHFLMI. Residues histidine 187 and histidine 202 each coordinate heme b.

Belongs to the cytochrome b family. PetB subfamily. The 4 large subunits of the cytochrome b6-f complex are cytochrome b6, subunit IV (17 kDa polypeptide, PetD), cytochrome f and the Rieske protein, while the 4 small subunits are PetG, PetL, PetM and PetN. The complex functions as a dimer. It depends on heme b as a cofactor. Requires heme c as cofactor.

Its subcellular location is the plastid. The protein localises to the chloroplast thylakoid membrane. Functionally, component of the cytochrome b6-f complex, which mediates electron transfer between photosystem II (PSII) and photosystem I (PSI), cyclic electron flow around PSI, and state transitions. The chain is Cytochrome b6 from Euglena gracilis.